Here is a 100-residue protein sequence, read N- to C-terminus: Large ribosomal subunit protein uL23 (100 aa).

This sequence belongs to the universal ribosomal protein uL23 family. In terms of assembly, part of the 50S ribosomal subunit. Contacts protein L29, and trigger factor when it is bound to the ribosome.

In terms of biological role, one of the early assembly proteins it binds 23S rRNA. One of the proteins that surrounds the polypeptide exit tunnel on the outside of the ribosome. Forms the main docking site for trigger factor binding to the ribosome. The chain is Large ribosomal subunit protein uL23 from Acaryochloris marina (strain MBIC 11017).